Reading from the N-terminus, the 636-residue chain is Leucine-rich repeat and fibronectin type-III domain-containing protein 4 (636 aa).

A signal peptide spans 1–16 (MAPPLLLLLLASGAAA). Positions 17–48 (CPLPCVCQNLSESLSTLCAHRGLLFVPPNVDR) constitute an LRRNT domain. At 17 to 518 (CPLPCVCQNL…LQAHVLGGTL (502 aa)) the chain is on the extracellular side. N-linked (GlcNAc...) asparagine glycans are attached at residues asparagine 25 and asparagine 70. LRR repeat units follow at residues 49-70 (RTVE…DFRN), 73-94 (GLVD…SFGD), 97-118 (SLRS…SLRG), 121-142 (NLQH…AFDD), 146-169 (SLED…GSMP), 170-191 (ALHT…VFAQ), and 194-215 (QLSR…PLFS). The LRRCT domain maps to 234–280 (NPLHCNCELLWLRRLARPDDLETCASPPTLAGRYFWAVPEGEFSCEP). An Ig-like domain is found at 281–367 (PLIARHTQRL…GEATARVELR (87 aa)). Cysteine 302 and cysteine 351 are disulfide-bonded. N-linked (GlcNAc...) asparagine glycosylation is found at asparagine 324, asparagine 333, asparagine 376, and asparagine 440. The Fibronectin type-III domain maps to 405–502 (SEPAVQVTEV…GCAHFSTLPA (98 aa)). A helical transmembrane segment spans residues 519–539 (TVAVGGVLVAALLVFTVALLV). The Cytoplasmic portion of the chain corresponds to 540–636 (RGRGAGNGRL…SAERLEESVV (97 aa)). A disordered region spans residues 556–585 (VQSQTNGGTSPMPKSHPPRSPPPRPQRSCS). Pro residues predominate over residues 569–580 (KSHPPRSPPPRP). A phosphoserine mark is found at serine 585 and serine 627. Residues 633–636 (ESVV) carry the PDZ-binding motif.

This sequence belongs to the LRFN family. In terms of assembly, can form heteromeric complexes with LRFN1, LRFN2, LRFN3 and LRFN5. Unable to form homophilic interactions across cell junctions. Interacts with DLG1, DLG2 and DLG3. Also interacts with DLG4. Glycosylated. As to expression, expressed in brain and testis. In the brain, weak, but broad expression in the cerebral cortex and diencephalic nuclei. Also detected in other parts of the central nervous system, including the olfactory bulb, pons, cerebellum, and medulla oblongata, as well as in the peripheral nervous system, such as the ganglia of cranial nerves and the dorsal root ganglion during gestation.

The protein localises to the membrane. In terms of biological role, promotes neurite outgrowth in hippocampal neurons. May play a role in redistributing DLG4 to the cell periphery. This Mus musculus (Mouse) protein is Leucine-rich repeat and fibronectin type-III domain-containing protein 4 (Lrfn4).